The sequence spans 229 residues: Cell division topological specificity factor homolog, chloroplastic (229 aa).

Residues 1-30 (MAMSSGTLRISATLVSPYHHHHRNRLSLPS) constitute a chloroplast transit peptide. Positions 35-141 (VDFTGFISNG…KMILFSDRCD (107 aa)) are interaction with MIND1. The interval 142–169 (VSDEAKRKIVNNIIHALSDFVEIESEEK) is homodimerization.

The protein belongs to the MinE family. In terms of assembly, homodimer. Interacts with MIND1. These interactions are required for proper intraplastidic localization. Binds to ARC3. As to expression, expressed in green tissues, especially at the shoot apex. Also present in leaves, stems, buds, and flowers, especially in sepals, siliques (tip and base), and anthers (mostly in pollen grains).

Its subcellular location is the plastid. The protein resides in the chloroplast. Functionally, acts as a topological specificity factor during plastid division and specify plastid constriction sites (such as the Z-ring) in a MCD1-dependent manner. Especially involved in epidermal plastids division in a FTSZ1-dependent manner. Required for the proper formation of FtsZ rings at the division site in nongreen plastids (e.g. etioplasts). May contribute to gravitropism in stems and hypocotyls. Stimulates MIND1 ATPase activity. In cooperation with MIND1, prevents FtsZ ring formation anywhere outside of the mid-plastids. The polypeptide is Cell division topological specificity factor homolog, chloroplastic (Arabidopsis thaliana (Mouse-ear cress)).